We begin with the raw amino-acid sequence, 69 residues long: Trypsin/subtilisin inhibitor (69 aa).

A disulfide bridge connects residues Cys4 and Cys49.

It belongs to the protease inhibitor I13 (potato type I serine protease inhibitor) family.

In terms of biological role, inhibitor of trypsin, chymotrypsin, subtilisin, etc. In Amaranthus caudatus (Love-lies-bleeding), this protein is Trypsin/subtilisin inhibitor.